A 298-amino-acid polypeptide reads, in one-letter code: Lipoyl synthase (298 aa).

7 residues coordinate [4Fe-4S] cluster: Cys-40, Cys-45, Cys-51, Cys-67, Cys-71, Cys-74, and Ser-280. The region spanning 53–269 (AVRKTATFMI…KEIALSKGFS (217 aa)) is the Radical SAM core domain.

This sequence belongs to the radical SAM superfamily. Lipoyl synthase family. It depends on [4Fe-4S] cluster as a cofactor.

Its subcellular location is the cytoplasm. It catalyses the reaction [[Fe-S] cluster scaffold protein carrying a second [4Fe-4S](2+) cluster] + N(6)-octanoyl-L-lysyl-[protein] + 2 oxidized [2Fe-2S]-[ferredoxin] + 2 S-adenosyl-L-methionine + 4 H(+) = [[Fe-S] cluster scaffold protein] + N(6)-[(R)-dihydrolipoyl]-L-lysyl-[protein] + 4 Fe(3+) + 2 hydrogen sulfide + 2 5'-deoxyadenosine + 2 L-methionine + 2 reduced [2Fe-2S]-[ferredoxin]. Its pathway is protein modification; protein lipoylation via endogenous pathway; protein N(6)-(lipoyl)lysine from octanoyl-[acyl-carrier-protein]. In terms of biological role, catalyzes the radical-mediated insertion of two sulfur atoms into the C-6 and C-8 positions of the octanoyl moiety bound to the lipoyl domains of lipoate-dependent enzymes, thereby converting the octanoylated domains into lipoylated derivatives. The polypeptide is Lipoyl synthase (Bacillus cytotoxicus (strain DSM 22905 / CIP 110041 / 391-98 / NVH 391-98)).